Here is a 547-residue protein sequence, read N- to C-terminus: Chaperonin GroEL 1 (547 aa).

Residues 30–33, Lys-51, 87–91, Gly-415, and Asp-496 each bind ATP; these read TLGP and DGTTT.

Belongs to the chaperonin (HSP60) family. In terms of assembly, forms a cylinder of 14 subunits composed of two heptameric rings stacked back-to-back. Interacts with the co-chaperonin GroES.

Its subcellular location is the cytoplasm. It carries out the reaction ATP + H2O + a folded polypeptide = ADP + phosphate + an unfolded polypeptide.. Functionally, together with its co-chaperonin GroES, plays an essential role in assisting protein folding. The GroEL-GroES system forms a nano-cage that allows encapsulation of the non-native substrate proteins and provides a physical environment optimized to promote and accelerate protein folding. The sequence is that of Chaperonin GroEL 1 from Rhodopseudomonas palustris (strain BisB18).